A 127-amino-acid polypeptide reads, in one-letter code: MAVAKADILDAIAGMTVLELSELIKEMEDKFGVSAAAAAVAVAAPAAGAGAAAAAEEQTEFTVMLNSAGEKKVEVIKVVRAATGLGLKEAKDLVDGAPKAVKEGVSKADADALKKQLEEAGASVEVK.

It belongs to the bacterial ribosomal protein bL12 family. In terms of assembly, homodimer. Part of the ribosomal stalk of the 50S ribosomal subunit. Forms a multimeric L10(L12)X complex, where L10 forms an elongated spine to which 2 to 4 L12 dimers bind in a sequential fashion. Binds GTP-bound translation factors.

Functionally, forms part of the ribosomal stalk which helps the ribosome interact with GTP-bound translation factors. Is thus essential for accurate translation. The chain is Large ribosomal subunit protein bL12 from Thiobacillus denitrificans (strain ATCC 25259 / T1).